The chain runs to 360 residues: MAPLRDRVSTLPRLQLLVLLLLPLLLVPQPIAGHGGKYSREKNEPEMAAKRESGEEFRMEKLNQLWEKAKRLHLSPVRLAELHSDLKIQERDELNWKKLKVEGLDGDGEKEAKLVHNLNVILARYGLDGRKDTQTVHSNALNEDTQDELGDPRLEKLWHKAKTSGKFSSEELDKLWREFLHYKEKIHEYNVLLDTLSRAEEGYENLLSPSDMTHIKSDTLASKHSELKDRLRSINQGLDRLRKVSHQGYGPATEFEEPRVIDLWDLAQSANFTEKELESFREELKHFEAKIEKHNHYQKQLEISHQKLKHVESIGDPEHISRNKEKYVLLEEKTKELGYKVKKHLQDLSSRVSRARHNEL.

An N-terminal signal peptide occupies residues 1–33; the sequence is MAPLRDRVSTLPRLQLLVLLLLPLLLVPQPIAG. S53 and S138 each carry phosphoserine. Positions 222-302 form a coiled coil; the sequence is SKHSELKDRL…KHNHYQKQLE (81 aa). The LDL receptor binding stretch occupies residues 240-356; that stretch reads RLRKVSHQGY…DLSSRVSRAR (117 aa). N-linked (GlcNAc...) asparagine glycosylation is present at N271. Residues 357–360 carry the Prevents secretion from ER motif; sequence HNEL.

Belongs to the alpha-2-MRAP family. In terms of assembly, interacts with the LRP1/alpha-2-macroglobulin receptor heavy and light chains; the interaction is transient and coincides with a reduction of ligand binding by the receptor. Interacts with LRP2/glycoprotein 330. Interacts with LRP1B; binding is followed by internalization and degradation. Interacts with LDLR. Interacts with SORL1. Interacts with LRP1; this interaction is followed by rapid internalization. In terms of processing, N-glycosylated.

It is found in the rough endoplasmic reticulum lumen. The protein localises to the endoplasmic reticulum-Golgi intermediate compartment lumen. The protein resides in the golgi apparatus. It localises to the cis-Golgi network. Its subcellular location is the golgi apparatus lumen. It is found in the endosome lumen. The protein localises to the cell surface. In terms of biological role, molecular chaperone for LDL receptor-related proteins that may regulate their ligand binding activity along the secretory pathway. The protein is Alpha-2-macroglobulin receptor-associated protein (Lrpap1) of Rattus norvegicus (Rat).